A 341-amino-acid polypeptide reads, in one-letter code: BZIP domain-containing transcription factor BZP4 (341 aa).

Polar residues-rich tracts occupy residues methionine 1–glutamate 32, leucine 61–leucine 76, proline 128–histidine 139, and tyrosine 150–serine 163. Disordered stretches follow at residues methionine 1 to methionine 95 and threonine 118 to glutamine 254. Positions serine 178 to proline 192 are enriched in low complexity. Composition is skewed to basic and acidic residues over residues threonine 225 to serine 234 and glutamate 242 to glutamine 254. Positions lysine 250–lysine 269 are basic motif. A bZIP domain is found at lysine 250–lysine 308. Residues isoleucine 279 to leucine 307 are leucine-zipper.

It belongs to the bZIP family.

Its subcellular location is the nucleus. It is found in the cytoplasm. Its function is as follows. Transcription factor that promotes the production of melanin, a pigment that serves as antioxidant, reactive oxygen species (ROS) scavenger and that protect fungal pathogens from radiation and host immune responses. This Cryptococcus neoformans var. grubii serotype A (strain H99 / ATCC 208821 / CBS 10515 / FGSC 9487) (Filobasidiella neoformans var. grubii) protein is BZIP domain-containing transcription factor BZP4.